The following is a 92-amino-acid chain: Small ribosomal subunit protein uS19 (92 aa).

This sequence belongs to the universal ribosomal protein uS19 family.

In terms of biological role, protein S19 forms a complex with S13 that binds strongly to the 16S ribosomal RNA. The protein is Small ribosomal subunit protein uS19 of Pectobacterium atrosepticum (strain SCRI 1043 / ATCC BAA-672) (Erwinia carotovora subsp. atroseptica).